The sequence spans 314 residues: Mitochondrial RNA-splicing protein MRS3 (314 aa).

Solcar repeat units follow at residues 31-118 (APLY…CKKN), 128-210 (HHPF…STKF), and 217-310 (YNPL…AKHF). 6 helical membrane passes run 33–52 (LYHQLIAGAFAGIMEHSVMF), 93–112 (GVQSVILGAGPAHAVYFGTY), 130–149 (PFKTAISGACATTASDALMN), 185–204 (SYPTTLVMNIPFAAFNFVIY), 219–238 (PLIHCLCGSISGSTCAAITT), and 285–298 (GWKPRIVANMPATA).

The protein belongs to the mitochondrial carrier (TC 2.A.29) family.

Its subcellular location is the mitochondrion inner membrane. Functionally, MRS3 suppresses a mitochondrial splice defect in the first intron of the COB gene. It may act as a carrier, exerting its suppressor activity via modulation of solute concentrations in the mitochondrion (possibly of cations). This is Mitochondrial RNA-splicing protein MRS3 (MRS3) from Saccharomyces cerevisiae (strain ATCC 204508 / S288c) (Baker's yeast).